The primary structure comprises 68 residues: Defensin gallicin (68 aa).

The signal sequence occupies residues 1 to 16 (MWIESDAGVAIDRHAR).

Post-translationally, contains 5 disulfide bonds. Expressed in hemolymph, gills, digestive gland, foot, adductor muscles and mantle.

It localises to the secreted. Its subcellular location is the target cell membrane. Its function is as follows. Shows antibacterial activity against numerous Gram-positive bacteria. It selectively inhibits peptidoglycan biosynthesis through complex formation with the cell wall precursor lipid II (1:1 molar ratio) thus inhibiting cell wall synthesis. The sequence is that of Defensin gallicin from Mytilus galloprovincialis (Mediterranean mussel).